The chain runs to 545 residues: Chaperonin GroEL (545 aa).

Residues 29–32 (TLGP), lysine 50, 86–90 (DGTTT), glycine 415, and aspartate 495 contribute to the ATP site.

The protein belongs to the chaperonin (HSP60) family. Forms a cylinder of 14 subunits composed of two heptameric rings stacked back-to-back. Interacts with the co-chaperonin GroES.

It is found in the cytoplasm. It carries out the reaction ATP + H2O + a folded polypeptide = ADP + phosphate + an unfolded polypeptide.. Its function is as follows. Together with its co-chaperonin GroES, plays an essential role in assisting protein folding. The GroEL-GroES system forms a nano-cage that allows encapsulation of the non-native substrate proteins and provides a physical environment optimized to promote and accelerate protein folding. This chain is Chaperonin GroEL, found in Porphyromonas gingivalis (strain ATCC 33277 / DSM 20709 / CIP 103683 / JCM 12257 / NCTC 11834 / 2561).